The sequence spans 195 residues: ALK and LTK ligand 2b (195 aa).

Cystine bridges form between Cys156-Cys192 and Cys170-Cys179.

It belongs to the ALKAL family. As to quaternary structure, homodimer. As to expression, highly expressed in the swim bladder and single cells of unknown identity in the head.

The protein localises to the secreted. The protein resides in the cell membrane. Functionally, cytokine that acts as a physiological ligand for receptor tyrosine kinases LTK and ALK. Required for neural crest cell differentiation and iridophore development during embryonic iridophore development and adult stripe development by acting as a receptor for LTK. Also required for iridophore formation in the adult eye. This is ALK and LTK ligand 2b from Danio rerio (Zebrafish).